Reading from the N-terminus, the 263-residue chain is Purine nucleoside phosphorylase SAR1163 (263 aa).

Zn(2+) is bound by residues H79, C124, and H141.

It belongs to the purine nucleoside phosphorylase YfiH/LACC1 family. Homodimer. Cu(2+) is required as a cofactor. Requires Zn(2+) as cofactor.

The catalysed reaction is adenosine + phosphate = alpha-D-ribose 1-phosphate + adenine. It catalyses the reaction S-methyl-5'-thioadenosine + phosphate = 5-(methylsulfanyl)-alpha-D-ribose 1-phosphate + adenine. It carries out the reaction inosine + phosphate = alpha-D-ribose 1-phosphate + hypoxanthine. The enzyme catalyses adenosine + H2O + H(+) = inosine + NH4(+). Purine nucleoside enzyme that catalyzes the phosphorolysis of adenosine and inosine nucleosides, yielding D-ribose 1-phosphate and the respective free bases, adenine and hypoxanthine. Also catalyzes the phosphorolysis of S-methyl-5'-thioadenosine into adenine and S-methyl-5-thio-alpha-D-ribose 1-phosphate. Also has adenosine deaminase activity. This is Purine nucleoside phosphorylase SAR1163 from Staphylococcus aureus (strain MRSA252).